A 315-amino-acid chain; its full sequence is Eukaryotic translation initiation factor 2 subunit 1 (315 aa).

The 72-residue stretch at 17-88 (EDVVMVNVRS…EKGYIDLSKR (72 aa)) folds into the S1 motif domain. Residue S49 is modified to Phosphoserine; by HRI. Residue S52 is modified to Phosphoserine. An N6-acetyllysine modification is found at K141. S158 carries the phosphoserine modification. 2 positions are modified to phosphothreonine: T279 and T281. The segment at 293 to 315 (LERENAEVDGDDDAEEMEAKAED) is disordered. Residues 299 to 308 (EVDGDDDAEE) are compositionally biased toward acidic residues.

The protein belongs to the eIF-2-alpha family. Eukaryotic translation initiation factor 2 eIF2 is a heterotrimeric complex composed of an alpha (EIF2S1), a beta (EIF2S2) and a gamma (EIF2S3) chain. eIF2 is member of the 43S pre-initiation complex (43S PIC). eIF2 forms a complex with at least CELF1/CUGBP1, CALR, CALR3, EIF2S1, EIF2S2, HSP90B1 and HSPA5. Interaction with METAP2 protects EIF2S1 from inhibitory phosphorylation. Interacts with ABCF1 isoform 2. Associates with ribosomes. Interacts with DDX3X in an RNA-independent manner. Interacts with CDC123. As to quaternary structure, (Microbial infection) Interacts with rotavirus A non-structural protein 2; this interaction probably plays a role in the sequestration of IF2A in viral factories. Interacts with rotavirus A non-structural protein 5; this interaction probably plays a role in its sequestration in viral factories. Post-translationally, phosphorylation at Ser-49 and Ser-52 stabilizes the eIF-2/GDP/eIF2B complex and prevents GDP/GTP exchange reaction, thus impairing the recycling of eIF-2 between successive rounds of initiation and leading to global inhibition of translation, while concomitantly initiating the preferential translation of integrated stress response (ISR)-specific mRNAs. Substrate for at least 4 kinases: EIF2AK1/HRI, EIF2AK2/PKR, EIF2AK3/PERK and EIF2AK4/GCN2. Phosphorylation on Ser-52 by the EIF2AK4/GCN2 protein kinase occurs in response to amino acid starvation and UV irradiation. Phosphorylation at Ser-52 by the EIF2AK3/PERK protein kinase occurs in response to the unfolded protein response. Phosphorylation at Ser-52 by EIF2AK1/HRI in response to mitochondrial damage promotes relocalization to the mitochondrial surface. In terms of processing, (Microbial infection) Phosphorylation by vaccinia virus protein E3 and rotavirus A stabilizes the eIF-2/GDP/eIF2B complex and prevents GDP/GTP exchange reaction, thus impairing the recycling of eIF-2 between successive rounds of initiation and leading to global inhibition of translation.

The protein localises to the cytoplasm. The protein resides in the stress granule. It is found in the cytosol. Its subcellular location is the mitochondrion. Activity is regulated by phosphorylation at Ser-49 and Ser-52, which stabilizes the eIF2/GDP/eIF2B complex and prevents the eIF2B-mediated exchange of GDP for GTP, thereby preventing the formation of the 43S pre-initiation complex (43S PIC). This results in the global attenuation of 5' cap-dependent protein synthesis and concomitant translation of ISR-specific mRNAs that contain a short upstream open reading frame (uORF) in their 5' UTR, such as ATF4, ATF5, DDIT3/CHOP and PPP1R15A/GADD34. Functionally, member of the eIF2 complex that functions in the early steps of protein synthesis by forming a ternary complex with GTP and initiator tRNA. This complex binds to a 40S ribosomal subunit, followed by mRNA binding to form a 43S pre-initiation complex (43S PIC). Junction of the 60S ribosomal subunit to form the 80S initiation complex is preceded by hydrolysis of the GTP bound to eIF2 and release of an eIF2-GDP binary complex. In order for eIF2 to recycle and catalyze another round of initiation, the GDP bound to eIF2 must exchange with GTP by way of a reaction catalyzed by eIF2B. EIF2S1/eIF2-alpha is a key component of the integrated stress response (ISR), required for adaptation to various stress: phosphorylation by metabolic-stress sensing protein kinases (EIF2AK1/HRI, EIF2AK2/PKR, EIF2AK3/PERK and EIF2AK4/GCN2) in response to stress converts EIF2S1/eIF2-alpha in a global protein synthesis inhibitor, leading to an attenuation of cap-dependent translation, while concomitantly initiating the preferential translation of ISR-specific mRNAs, such as the transcriptional activators ATF4 and QRICH1, and hence allowing ATF4- and QRICH1-mediated reprogramming. EIF2S1/eIF2-alpha also acts as an activator of mitophagy in response to mitochondrial damage: phosphorylation by EIF2AK1/HRI promotes relocalization to the mitochondrial surface, thereby triggering PRKN-independent mitophagy. This Homo sapiens (Human) protein is Eukaryotic translation initiation factor 2 subunit 1.